Reading from the N-terminus, the 301-residue chain is Acetyl-coenzyme A carboxylase carboxyl transferase subunit beta (301 aa).

In terms of domain architecture, CoA carboxyltransferase N-terminal spans 25-294 (LWIKCPETGE…SAANDMNSGA (270 aa)).

It belongs to the AccD/PCCB family. Acetyl-CoA carboxylase is a heterohexamer composed of biotin carboxyl carrier protein (AccB), biotin carboxylase (AccC) and two subunits each of ACCase subunit alpha (AccA) and ACCase subunit beta (AccD).

The protein localises to the cytoplasm. The enzyme catalyses N(6)-carboxybiotinyl-L-lysyl-[protein] + acetyl-CoA = N(6)-biotinyl-L-lysyl-[protein] + malonyl-CoA. Its pathway is lipid metabolism; malonyl-CoA biosynthesis; malonyl-CoA from acetyl-CoA: step 1/1. Component of the acetyl coenzyme A carboxylase (ACC) complex. Biotin carboxylase (BC) catalyzes the carboxylation of biotin on its carrier protein (BCCP) and then the CO(2) group is transferred by the transcarboxylase to acetyl-CoA to form malonyl-CoA. This chain is Acetyl-coenzyme A carboxylase carboxyl transferase subunit beta, found in Rhizobium leguminosarum bv. trifolii (strain WSM1325).